A 188-amino-acid chain; its full sequence is ATP synthase subunit b, chloroplastic (188 aa).

A helical membrane pass occupies residues 35 to 57 (LINLAVVIGVLVYFGKGVLTTLL).

Belongs to the ATPase B chain family. In terms of assembly, F-type ATPases have 2 components, F(1) - the catalytic core - and F(0) - the membrane proton channel. F(1) has five subunits: alpha(3), beta(3), gamma(1), delta(1), epsilon(1). F(0) has four main subunits: a(1), b(1), b'(1) and c(10-14). The alpha and beta chains form an alternating ring which encloses part of the gamma chain. F(1) is attached to F(0) by a central stalk formed by the gamma and epsilon chains, while a peripheral stalk is formed by the delta, b and b' chains.

Its subcellular location is the plastid. It localises to the chloroplast thylakoid membrane. In terms of biological role, f(1)F(0) ATP synthase produces ATP from ADP in the presence of a proton or sodium gradient. F-type ATPases consist of two structural domains, F(1) containing the extramembraneous catalytic core and F(0) containing the membrane proton channel, linked together by a central stalk and a peripheral stalk. During catalysis, ATP synthesis in the catalytic domain of F(1) is coupled via a rotary mechanism of the central stalk subunits to proton translocation. Functionally, component of the F(0) channel, it forms part of the peripheral stalk, linking F(1) to F(0). In Zygnema circumcarinatum (Green alga), this protein is ATP synthase subunit b, chloroplastic.